The following is a 124-amino-acid chain: Flowering-promoting factor 1-like protein 1 (124 aa).

Positions 19 to 42 (PYNQSAGDSSESSSSGGNQQQRMR) are disordered. The segment covering 22 to 39 (QSAGDSSESSSSGGNQQQ) has biased composition (low complexity).

The protein belongs to the FPF1 family. As to expression, expressed in roots, flowers, and at a low level, in leaves.

Its function is as follows. Modulates the competence to flowering of apical meristems. The chain is Flowering-promoting factor 1-like protein 1 (FLP1) from Arabidopsis thaliana (Mouse-ear cress).